The primary structure comprises 118 residues: T cell receptor gamma variable 4 (118 aa).

The first 17 residues, methionine 1–glutamine 17, serve as a signal peptide directing secretion. Residues lysine 18–glycine 118 form the Ig-like domain. A disulfide bond links cysteine 41 and cysteine 113. Asparagine 106 carries N-linked (GlcNAc...) asparagine glycosylation.

As to quaternary structure, gamma-delta TR is a heterodimer composed of a gamma and delta chain; disulfide-linked. The gamma-delta TR is associated with the transmembrane signaling CD3 coreceptor proteins following the stoichiometry: a single gamma-delta TR heterodimer associates with one CD3D-CD3E heterodimer, one CD3G-CD3E heterodimer and one CD247 homodimer forming a stable octameric structure. Upon activation, gamma-delta TR complex associates with FCER1G to initiate intracellular signaling.

The protein localises to the cell membrane. Its function is as follows. V region of the variable domain of T cell receptor (TR) gamma chain that participates in the antigen recognition. Gamma-delta TRs recognize a variety of self and foreign non-peptide antigens frequently expressed at the epithelial boundaries between the host and external environment, including endogenous lipids presented by MH-like protein CD1D and phosphoantigens presented by butyrophilin-like molecule BTN3A1. Upon antigen recognition induces rapid, innate-like immune responses involved in pathogen clearance and tissue repair. Binding of gamma-delta TR complex to antigen triggers phosphorylation of immunoreceptor tyrosine-based activation motifs (ITAMs) in the CD3 chains by the LCK and FYN kinases, allowing the recruitment, phosphorylation, and activation of ZAP70 that facilitates phosphorylation of the scaffolding proteins LCP2 and LAT. This lead to the formation of a supramolecular signalosome that recruits the phospholipase PLCG1, resulting in calcium mobilization and ERK activation, ultimately leading to T cell expansion and differentiation into effector cells. Gamma-delta TRs are produced through somatic rearrangement of a limited repertoire of variable (V), diversity (D), and joining (J) genes. The potential diversity of gamma-delta TRs is conferred by the unique ability to rearrange (D) genes in tandem and to utilize all three reading frames. The combinatorial diversity is considerably increased by the sequence exonuclease trimming and random nucleotide (N) region additions which occur during the V-(D)-J rearrangements. The chain is T cell receptor gamma variable 4 from Homo sapiens (Human).